Reading from the N-terminus, the 426-residue chain is Serine--tRNA ligase (426 aa).

Residues 41-60 (QTRTEQLQAERNARSKSIGQ) show a composition bias toward polar residues. Positions 41–64 (QTRTEQLQAERNARSKSIGQAKQR) are disordered. 233 to 235 (TAE) is an L-serine binding site. 264 to 266 (RSE) provides a ligand contact to ATP. Glutamate 287 lines the L-serine pocket. Residue 351 to 354 (EISS) coordinates ATP. Residue serine 387 participates in L-serine binding.

It belongs to the class-II aminoacyl-tRNA synthetase family. Type-1 seryl-tRNA synthetase subfamily. Homodimer. The tRNA molecule binds across the dimer.

It localises to the cytoplasm. It carries out the reaction tRNA(Ser) + L-serine + ATP = L-seryl-tRNA(Ser) + AMP + diphosphate + H(+). The enzyme catalyses tRNA(Sec) + L-serine + ATP = L-seryl-tRNA(Sec) + AMP + diphosphate + H(+). The protein operates within aminoacyl-tRNA biosynthesis; selenocysteinyl-tRNA(Sec) biosynthesis; L-seryl-tRNA(Sec) from L-serine and tRNA(Sec): step 1/1. In terms of biological role, catalyzes the attachment of serine to tRNA(Ser). Is also able to aminoacylate tRNA(Sec) with serine, to form the misacylated tRNA L-seryl-tRNA(Sec), which will be further converted into selenocysteinyl-tRNA(Sec). The chain is Serine--tRNA ligase from Pseudomonas fluorescens (strain ATCC BAA-477 / NRRL B-23932 / Pf-5).